A 544-amino-acid chain; its full sequence is Esterase-6 (544 aa).

An N-terminal signal peptide occupies residues 1 to 21 (MNYVGLGLIIVLSCLWLGSNA). N-linked (GlcNAc...) asparagine glycosylation is present at N42. C86 and C105 form a disulfide bridge. Residue S209 is the Acyl-ester intermediate of the active site. A disulfide bridge connects residues C261 and C273. N-linked (GlcNAc...) asparagine glycosylation is found at N420 and N456. The Charge relay system role is filled by H466. N506 is a glycosylation site (N-linked (GlcNAc...) asparagine). A disulfide bridge links C514 with C535.

This sequence belongs to the type-B carboxylesterase/lipase family. Monomer. As to expression, specifically expressed in the ejaculatory bulbs of male.

The protein localises to the secreted. It catalyses the reaction a carboxylic ester + H2O = an alcohol + a carboxylate + H(+). Its function is as follows. Transferred from the ejaculatory bulbs of males to the female genitals upon copulation, plays an important role in the reproductive biology. This is Esterase-6 (Est-6) from Drosophila melanogaster (Fruit fly).